We begin with the raw amino-acid sequence, 315 residues long: Serine/threonine-protein phosphatase PP2A catalytic subunit 3 (315 aa).

Mn(2+) contacts are provided by Asp62, His64, Asp90, and Asn122. His123 serves as the catalytic Proton donor. Mn(2+)-binding residues include His172 and His247. The disordered stretch occupies residues 294–315 (QFEPAPRENEPHTTRRVPDYFL). The span at 298-315 (APRENEPHTTRRVPDYFL) shows a compositional bias: basic and acidic residues. Leu315 carries the post-translational modification Leucine methyl ester.

Belongs to the PPP phosphatase family. PP-2A subfamily. Mn(2+) is required as a cofactor. Post-translationally, reversibly methyl esterified on Leu-315 by leucine carboxyl methyltransferase 1 (PPM1) and protein phosphatase methylesterase 1 (PPE1). Carboxyl methylation influences the affinity of the catalytic subunit for the different regulatory subunits, thereby modulating the PP2A holoenzyme's substrate specificity, enzyme activity and cellular localization.

The catalysed reaction is O-phospho-L-seryl-[protein] + H2O = L-seryl-[protein] + phosphate. The enzyme catalyses O-phospho-L-threonyl-[protein] + H2O = L-threonyl-[protein] + phosphate. This is Serine/threonine-protein phosphatase PP2A catalytic subunit 3 (Ppn3) from Paramecium tetraurelia.